Reading from the N-terminus, the 198-residue chain is Acireductone dioxygenase (198 aa).

Fe(2+) contacts are provided by His97, His99, Glu103, and His141. Residues His97, His99, Glu103, and His141 each contribute to the Ni(2+) site.

This sequence belongs to the acireductone dioxygenase (ARD) family. Monomer. Requires Fe(2+) as cofactor. The cofactor is Ni(2+).

The catalysed reaction is 1,2-dihydroxy-5-(methylsulfanyl)pent-1-en-3-one + O2 = 3-(methylsulfanyl)propanoate + CO + formate + 2 H(+). It catalyses the reaction 1,2-dihydroxy-5-(methylsulfanyl)pent-1-en-3-one + O2 = 4-methylsulfanyl-2-oxobutanoate + formate + 2 H(+). It functions in the pathway amino-acid biosynthesis; L-methionine biosynthesis via salvage pathway; L-methionine from S-methyl-5-thio-alpha-D-ribose 1-phosphate: step 5/6. In terms of biological role, catalyzes 2 different reactions between oxygen and the acireductone 1,2-dihydroxy-3-keto-5-methylthiopentene (DHK-MTPene) depending upon the metal bound in the active site. Fe-containing acireductone dioxygenase (Fe-ARD) produces formate and 2-keto-4-methylthiobutyrate (KMTB), the alpha-ketoacid precursor of methionine in the methionine recycle pathway. Ni-containing acireductone dioxygenase (Ni-ARD) produces methylthiopropionate, carbon monoxide and formate, and does not lie on the methionine recycle pathway. The chain is Acireductone dioxygenase from Synechococcus elongatus (strain ATCC 33912 / PCC 7942 / FACHB-805) (Anacystis nidulans R2).